A 38-amino-acid chain; its full sequence is Cytochrome b6-f complex subunit 5 (38 aa).

A helical membrane pass occupies residues 5–25; sequence LLCGIVLGLIPVTLLGLFVDA.

This sequence belongs to the PetG family. In terms of assembly, the 4 large subunits of the cytochrome b6-f complex are cytochrome b6, subunit IV (17 kDa polypeptide, PetD), cytochrome f and the Rieske protein, while the 4 small subunits are PetG, PetL, PetM and PetN. The complex functions as a dimer.

It is found in the cellular thylakoid membrane. In terms of biological role, component of the cytochrome b6-f complex, which mediates electron transfer between photosystem II (PSII) and photosystem I (PSI), cyclic electron flow around PSI, and state transitions. PetG is required for either the stability or assembly of the cytochrome b6-f complex. In Prochlorococcus marinus (strain MIT 9313), this protein is Cytochrome b6-f complex subunit 5.